The primary structure comprises 362 residues: Probable non-structural 41.0 kDa protein (362 aa).

A disordered region spans residues 341 to 362; sequence MNAAAPSAPTPTELPVFSPPSS.

The chain is Probable non-structural 41.0 kDa protein (S6) from Maize rough dwarf virus (MRDV).